A 201-amino-acid polypeptide reads, in one-letter code: dITP/XTP pyrophosphatase (201 aa).

8-13 contributes to the substrate binding site; the sequence is TTNENK. The Proton acceptor role is filled by Asp68. Asp68 is a Mg(2+) binding site. Substrate contacts are provided by residues Ser69, 155–158, Lys177, and 182–183; these read FGYD and HR.

Belongs to the HAM1 NTPase family. Homodimer. Mg(2+) serves as cofactor.

It carries out the reaction XTP + H2O = XMP + diphosphate + H(+). The catalysed reaction is dITP + H2O = dIMP + diphosphate + H(+). The enzyme catalyses ITP + H2O = IMP + diphosphate + H(+). Pyrophosphatase that catalyzes the hydrolysis of nucleoside triphosphates to their monophosphate derivatives, with a high preference for the non-canonical purine nucleotides XTP (xanthosine triphosphate), dITP (deoxyinosine triphosphate) and ITP. Seems to function as a house-cleaning enzyme that removes non-canonical purine nucleotides from the nucleotide pool, thus preventing their incorporation into DNA/RNA and avoiding chromosomal lesions. The sequence is that of dITP/XTP pyrophosphatase from Borrelia garinii subsp. bavariensis (strain ATCC BAA-2496 / DSM 23469 / PBi) (Borreliella bavariensis).